The chain runs to 276 residues: Protein HemX (276 aa).

Helical transmembrane passes span 9–29 (LNEG…IDFL), 40–60 (FWLL…FMWV), 66–86 (VLNV…LSLV), 93–113 (VDFI…IHTF), 132–152 (LVIH…SFVF), 187–207 (VLNV…VIWA), 217–237 (FDAK…YLYI), and 247–267 (VAAL…FLLG).

The protein to M.leprae U1620K.

It is found in the cell membrane. In terms of biological role, required for HemL synthesis. The chain is Protein HemX (hemX) from Bacillus subtilis (strain 168).